The sequence spans 72 residues: Translation initiation factor IF-1 (72 aa).

The 72-residue stretch at M1 to K72 folds into the S1-like domain.

Belongs to the IF-1 family. As to quaternary structure, component of the 30S ribosomal translation pre-initiation complex which assembles on the 30S ribosome in the order IF-2 and IF-3, IF-1 and N-formylmethionyl-tRNA(fMet); mRNA recruitment can occur at any time during PIC assembly.

The protein resides in the cytoplasm. Its function is as follows. One of the essential components for the initiation of protein synthesis. Stabilizes the binding of IF-2 and IF-3 on the 30S subunit to which N-formylmethionyl-tRNA(fMet) subsequently binds. Helps modulate mRNA selection, yielding the 30S pre-initiation complex (PIC). Upon addition of the 50S ribosomal subunit IF-1, IF-2 and IF-3 are released leaving the mature 70S translation initiation complex. This chain is Translation initiation factor IF-1, found in Porphyromonas gingivalis (strain ATCC BAA-308 / W83).